We begin with the raw amino-acid sequence, 312 residues long: tRNA pseudouridine synthase B (312 aa).

Asp37 acts as the Nucleophile in catalysis.

It belongs to the pseudouridine synthase TruB family. Type 1 subfamily.

It carries out the reaction uridine(55) in tRNA = pseudouridine(55) in tRNA. Responsible for synthesis of pseudouridine from uracil-55 in the psi GC loop of transfer RNAs. The polypeptide is tRNA pseudouridine synthase B (Thermus thermophilus (strain ATCC BAA-163 / DSM 7039 / HB27)).